A 92-amino-acid polypeptide reads, in one-letter code: Acylphosphatase (92 aa).

A disulfide bond links Cys5 and Cys49. The 88-residue stretch at 5 to 92 (CIIAWIYGRV…SGELTDFRIR (88 aa)) folds into the Acylphosphatase-like domain. Residues Arg20 and Asn38 contribute to the active site.

The protein belongs to the acylphosphatase family.

It catalyses the reaction an acyl phosphate + H2O = a carboxylate + phosphate + H(+). This is Acylphosphatase from Shigella boydii serotype 4 (strain Sb227).